Consider the following 277-residue polypeptide: Small ribosomal subunit protein uS2 (277 aa).

Over residues 228-241 (YEERLQAETDKDAE) the composition is skewed to basic and acidic residues. A disordered region spans residues 228 to 277 (YEERLQAETDKDAESSTVQQEENPEADIPESIETKESVSAAADSDLDENE).

The protein belongs to the universal ribosomal protein uS2 family.

The polypeptide is Small ribosomal subunit protein uS2 (Syntrophus aciditrophicus (strain SB)).